The chain runs to 411 residues: Adenylosuccinate synthetase (411 aa).

GTP is bound by residues 11 to 17 (GDEGKGK) and 39 to 41 (GHT). Aspartate 12 functions as the Proton acceptor in the catalytic mechanism. Residues aspartate 12 and glycine 39 each coordinate Mg(2+). IMP-binding positions include 12–15 (DEGK), 37–40 (NAGH), threonine 121, arginine 135, glutamine 215, threonine 230, and arginine 294. Histidine 40 (proton donor) is an active-site residue. 290–296 (TTTKRPR) is a binding site for substrate. GTP is bound by residues arginine 296, 322–324 (KLD), and 400–402 (STS).

The protein belongs to the adenylosuccinate synthetase family. In terms of assembly, homodimer. Mg(2+) serves as cofactor.

The protein localises to the cytoplasm. The catalysed reaction is IMP + L-aspartate + GTP = N(6)-(1,2-dicarboxyethyl)-AMP + GDP + phosphate + 2 H(+). The protein operates within purine metabolism; AMP biosynthesis via de novo pathway; AMP from IMP: step 1/2. In terms of biological role, plays an important role in the de novo pathway of purine nucleotide biosynthesis. Catalyzes the first committed step in the biosynthesis of AMP from IMP. The chain is Adenylosuccinate synthetase from Helicobacter pylori (strain P12).